A 224-amino-acid chain; its full sequence is Urease accessory protein UreF (224 aa).

This sequence belongs to the UreF family. In terms of assembly, ureD, UreF and UreG form a complex that acts as a GTP-hydrolysis-dependent molecular chaperone, activating the urease apoprotein by helping to assemble the nickel containing metallocenter of UreC. The UreE protein probably delivers the nickel.

It localises to the cytoplasm. Required for maturation of urease via the functional incorporation of the urease nickel metallocenter. This Pseudomonas savastanoi pv. phaseolicola (strain 1448A / Race 6) (Pseudomonas syringae pv. phaseolicola (strain 1448A / Race 6)) protein is Urease accessory protein UreF.